The sequence spans 245 residues: MLWEAVTDKPVKLKGLLELLLNNMDSARLVVTSQSVSVVDYQSNMAVTASMPSSVFTSYVYKSDAECLYAGLPHAALPDLKSFKAKCNVTLRLMGDPECGQYTMKIIIANASHMSTSINMVVDHGKKEADRGHPEGAGKPFTLTQQEFNTLCKTFKQGPVNLGVFGGVLVASGGVDGIKVKEVAFGAPDCVTPHVKLCVHAEKMSRLVKMGPFSAGSLTVCVAQGSVTVSTCGHLGSLTVTLFEG.

This is an uncharacterized protein from Frog virus 3 (isolate Goorha) (FV-3).